The primary structure comprises 642 residues: ATP-dependent zinc metalloprotease FtsH (642 aa).

Residues 1–6 (MGRFTK) are Cytoplasmic-facing. A helical transmembrane segment spans residues 7–27 (NIVLYLLIIAAFVIAIDAFSG). At 28-101 (QSANKSELSY…TAAPPEQPAW (74 aa)) the chain is on the extracellular side. A helical transmembrane segment spans residues 102-122 (WMSLLGSAIPIIILVVLFFFI). Over 123–642 (MQQTQGGGGR…LSEASSNEIK (520 aa)) the chain is Cytoplasmic. 194-201 (GPPGTGKT) is an ATP binding site. His-416 is a Zn(2+) binding site. Glu-417 is an active-site residue. The Zn(2+) site is built by His-420 and Asp-492. The span at 597–610 (TTKEPEAEEPKVAS) shows a compositional bias: basic and acidic residues. Positions 597-642 (TTKEPEAEEPKVASEADSSIVPEGVDAKKTTSTVADLSEASSNEIK) are disordered. Over residues 626-642 (TTSTVADLSEASSNEIK) the composition is skewed to polar residues.

This sequence in the central section; belongs to the AAA ATPase family. The protein in the C-terminal section; belongs to the peptidase M41 family. As to quaternary structure, homohexamer. Requires Zn(2+) as cofactor.

It is found in the cell membrane. Functionally, acts as a processive, ATP-dependent zinc metallopeptidase for both cytoplasmic and membrane proteins. Plays a role in the quality control of integral membrane proteins. This chain is ATP-dependent zinc metalloprotease FtsH, found in Veillonella parvula (strain ATCC 10790 / DSM 2008 / CCUG 5123 / JCM 12972 / NCTC 11810 / Te3) (Veillonella alcalescens).